Here is a 155-residue protein sequence, read N- to C-terminus: Small ribosomal subunit protein uS9 (155 aa).

It belongs to the universal ribosomal protein uS9 family.

The sequence is that of Small ribosomal subunit protein uS9 from Rhizobium johnstonii (strain DSM 114642 / LMG 32736 / 3841) (Rhizobium leguminosarum bv. viciae).